Reading from the N-terminus, the 142-residue chain is Large ribosomal subunit protein uL13 (142 aa).

This sequence belongs to the universal ribosomal protein uL13 family. As to quaternary structure, part of the 50S ribosomal subunit.

This protein is one of the early assembly proteins of the 50S ribosomal subunit, although it is not seen to bind rRNA by itself. It is important during the early stages of 50S assembly. This chain is Large ribosomal subunit protein uL13, found in Bordetella bronchiseptica (strain ATCC BAA-588 / NCTC 13252 / RB50) (Alcaligenes bronchisepticus).